The sequence spans 321 residues: Secreted RxLR effector protein 71 (321 aa).

A signal peptide spans 1–23 (MRPTGWRWPVLSLLLVLLPFQAA). The RxLR motif lies at 84-87 (RSLR). N114 carries an N-linked (GlcNAc...) asparagine glycan. The interval 210–237 (VSLGRDGNGPVRGISSSPTRLTRPRMGG) is disordered.

The protein belongs to the RxLR effector family.

It localises to the secreted. The protein localises to the host cell. In terms of biological role, secreted effector that partially suppresses the host cell death induced by cell death-inducing proteins. The chain is Secreted RxLR effector protein 71 from Plasmopara viticola (Downy mildew of grapevine).